The sequence spans 290 residues: Cilia- and flagella-associated protein 298 (290 aa).

This sequence belongs to the CFAP298 family. As to quaternary structure, interacts with dnaaf1/swt. Interacts with lrrc6/sea. Interacts with dvl (via DEP and PDZ domains). As to expression, strongly expressed in ciliated tissues of the embryonic trunk, including the pronephric ducts and spinal canal.

The protein localises to the cytoplasm. Its subcellular location is the cytoskeleton. It localises to the cilium basal body. Plays a role in motile cilium function, possibly by acting on outer dynein arm assembly. Seems to be important for initiation rather than maintenance of cilium motility. Required for correct positioning of cilia at the apical cell surface, suggesting an additional role in the planar cell polarity (PCP) pathway. May suppress canonical Wnt signaling activity. The protein is Cilia- and flagella-associated protein 298 of Danio rerio (Zebrafish).